The sequence spans 832 residues: Subtilisin-like protease SBT2.4 (832 aa).

The first 27 residues, 1 to 27 (METNPRKLRSYSYICLIVCIFVLVVCA), serve as a signal peptide directing secretion. Positions 74–138 (EAKKIEEIHD…VEEDKGVKLM (65 aa)) constitute an Inhibitor I9 domain. One can recognise a Peptidase S8 domain in the interval 150–690 (QQVWQKISNE…AGHVNPARAL (541 aa)). Asp-174 functions as the Charge relay system in the catalytic mechanism. N-linked (GlcNAc...) asparagine glycans are attached at residues Asn-196 and Asn-238. His-252 acts as the Charge relay system in catalysis. A PA domain is found at 425-524 (TNGSVLQPLT…SAAQIILRYY (100 aa)). Asn-426 carries an N-linked (GlcNAc...) asparagine glycan. Residue Ser-618 is the Charge relay system of the active site. N-linked (GlcNAc...) asparagine glycosylation is found at Asn-761, Asn-774, and Asn-800.

Belongs to the peptidase S8 family.

Its subcellular location is the secreted. Its function is as follows. Serine protease required for epidermal surface formation in embryos and juvenile plants. Involved in embryonic cuticle formation downstream of BHLH95/ZOU. This chain is Subtilisin-like protease SBT2.4, found in Arabidopsis thaliana (Mouse-ear cress).